The following is a 224-amino-acid chain: Orotate phosphoribosyltransferase (224 aa).

Lysine 29 lines the 5-phospho-alpha-D-ribose 1-diphosphate pocket. Phenylalanine 37 to phenylalanine 38 provides a ligand contact to orotate. Residues tyrosine 75–lysine 76, arginine 105, lysine 106, lysine 109, histidine 111, and aspartate 130–serine 138 each bind 5-phospho-alpha-D-ribose 1-diphosphate. Positions 134 and 162 each coordinate orotate.

It belongs to the purine/pyrimidine phosphoribosyltransferase family. PyrE subfamily. As to quaternary structure, homodimer. Mg(2+) serves as cofactor.

The enzyme catalyses orotidine 5'-phosphate + diphosphate = orotate + 5-phospho-alpha-D-ribose 1-diphosphate. It functions in the pathway pyrimidine metabolism; UMP biosynthesis via de novo pathway; UMP from orotate: step 1/2. In terms of biological role, catalyzes the transfer of a ribosyl phosphate group from 5-phosphoribose 1-diphosphate to orotate, leading to the formation of orotidine monophosphate (OMP). This Bordetella parapertussis (strain 12822 / ATCC BAA-587 / NCTC 13253) protein is Orotate phosphoribosyltransferase.